Consider the following 67-residue polypeptide: Large ribosomal subunit protein bL35 (67 aa).

The segment at 21–50 (KVMCGPGNKRHGLINRPQKMKRTNRGPQTM) is disordered. Positions 28 to 44 (NKRHGLINRPQKMKRTN) are enriched in basic residues.

It belongs to the bacterial ribosomal protein bL35 family.

The polypeptide is Large ribosomal subunit protein bL35 (Gluconobacter oxydans (strain 621H) (Gluconobacter suboxydans)).